The chain runs to 374 residues: Nucleosome assembly protein 1;3 (374 aa).

The stretch at 26 to 80 (VNALKNKLQNLAGQHSDVLENLTPKIRRRVEVLREIQGKHDEIETKFREERAALE) forms a coiled coil. Serine 41 carries the phosphoserine modification. Positions 47-62 (LTPKIRRRVEVLREIQ) match the Nuclear export signal motif. The short motif at 222 to 227 (KKKPKK) is the Nuclear localization signal element. Residues 299-339 (IEGEEFEIDNDDEDDIDEDEDEDEEDEDEDEEEDDEDEEEE) show a composition bias toward acidic residues. A disordered region spans residues 299–374 (IEGEEFEIDN…GERPPECKQQ (76 aa)). Basic residues predominate over residues 343–355 (TKKKPSVLHKKGG). Over residues 364-374 (QGERPPECKQQ) the composition is skewed to basic and acidic residues. Cysteine 371 is modified (cysteine methyl ester). A lipid anchor (S-farnesyl cysteine) is attached at cysteine 371. A propeptide spans 372–374 (KQQ) (removed in mature form).

This sequence belongs to the nucleosome assembly protein (NAP) family. As to quaternary structure, can form homomeric and heteromeric protein complexes with NAP1;1, NAP1;2 and NAP1;4. Binds histone H2A and associates with chromatin in vivo. Ubiquitous.

Its subcellular location is the nucleus. It localises to the cytoplasm. Functionally, may modulate chromatin structure by regulation of nucleosome assembly/disassembly. May function in nucleotide excision repair (NER). Involved in somatic homologous recombination. Could be involved in response to abscisic acid (ABA) and to salt stress. The chain is Nucleosome assembly protein 1;3 (NAP1;3) from Arabidopsis thaliana (Mouse-ear cress).